We begin with the raw amino-acid sequence, 330 residues long: Protein qutG (330 aa).

Positions 78, 100, 102, 103, and 251 each coordinate Mg(2+). Glu-78 provides a ligand contact to substrate. Substrate-binding positions include 102–105 (LDGT) and Asp-251.

It belongs to the inositol monophosphatase superfamily.

Its function is as follows. Not known. Probably involved in quinate metabolism. This chain is Protein qutG (qutG), found in Emericella nidulans (strain FGSC A4 / ATCC 38163 / CBS 112.46 / NRRL 194 / M139) (Aspergillus nidulans).